The chain runs to 407 residues: Na(+)-translocating NADH-quinone reductase subunit F (407 aa).

A helical transmembrane segment spans residues 3–23 (IILGVVMFTLIVLVLSGLILA). The 2Fe-2S ferredoxin-type domain occupies 32 to 126 (GDVVIEINNE…NMKIELPEEI (95 aa)). The [2Fe-2S] cluster site is built by Cys69, Cys75, Cys78, and Cys110. In terms of domain architecture, FAD-binding FR-type spans 129–269 (VKKWECEVIS…SGPFGEFFAK (141 aa)).

It belongs to the NqrF family. Composed of six subunits; NqrA, NqrB, NqrC, NqrD, NqrE and NqrF. [2Fe-2S] cluster is required as a cofactor. It depends on FAD as a cofactor.

It is found in the cell inner membrane. It catalyses the reaction a ubiquinone + n Na(+)(in) + NADH + H(+) = a ubiquinol + n Na(+)(out) + NAD(+). Functionally, NQR complex catalyzes the reduction of ubiquinone-1 to ubiquinol by two successive reactions, coupled with the transport of Na(+) ions from the cytoplasm to the periplasm. The first step is catalyzed by NqrF, which accepts electrons from NADH and reduces ubiquinone-1 to ubisemiquinone by a one-electron transfer pathway. The protein is Na(+)-translocating NADH-quinone reductase subunit F of Klebsiella pneumoniae subsp. pneumoniae (strain ATCC 700721 / MGH 78578).